The chain runs to 438 residues: Methylenetetrahydrofolate--tRNA-(uracil-5-)-methyltransferase TrmFO (438 aa).

9 to 14 (GGGLAG) contributes to the FAD binding site.

It belongs to the MnmG family. TrmFO subfamily. FAD is required as a cofactor.

Its subcellular location is the cytoplasm. It catalyses the reaction uridine(54) in tRNA + (6R)-5,10-methylene-5,6,7,8-tetrahydrofolate + NADH + H(+) = 5-methyluridine(54) in tRNA + (6S)-5,6,7,8-tetrahydrofolate + NAD(+). The enzyme catalyses uridine(54) in tRNA + (6R)-5,10-methylene-5,6,7,8-tetrahydrofolate + NADPH + H(+) = 5-methyluridine(54) in tRNA + (6S)-5,6,7,8-tetrahydrofolate + NADP(+). Its function is as follows. Catalyzes the folate-dependent formation of 5-methyl-uridine at position 54 (M-5-U54) in all tRNAs. In Lactobacillus johnsonii (strain CNCM I-12250 / La1 / NCC 533), this protein is Methylenetetrahydrofolate--tRNA-(uracil-5-)-methyltransferase TrmFO.